The following is a 318-amino-acid chain: MKKLNLVALPHFVSVENLKNDEVKALIKRAEYFKKGGAVARLTSPVYVTNMFFEDSSRTHTSFEMAERKLGLTVIPFDPAHSSVNKGETLYDTSLVMNALGIDLEVIRHSQNEYYEDLINLKQHQKLNIGVINAGDGSGQHPSQCMLDMMTIHEHFGHFKGLKVAIVGDITNSRVAKSDMELLTKLGAEVYFSGPECWYSEEFDQYGKHEELDKLIPKMDVMMLLRVQHERHSGDPNEKKFDAHRYHEKYGINHKRYEAMKKDAIIMHPGPINHDVELSGDLVESDKCMFVRQMENGVFMRMAMLEAVLRGRKLGGLE.

2 residues coordinate carbamoyl phosphate: R58 and T59. K86 is an L-aspartate binding site. Carbamoyl phosphate-binding residues include R108, H141, and Q144. L-aspartate is bound by residues R174 and R226. Positions 270 and 271 each coordinate carbamoyl phosphate.

Belongs to the aspartate/ornithine carbamoyltransferase superfamily. ATCase family. In terms of assembly, heterododecamer (2C3:3R2) of six catalytic PyrB chains organized as two trimers (C3), and six regulatory PyrI chains organized as three dimers (R2).

The enzyme catalyses carbamoyl phosphate + L-aspartate = N-carbamoyl-L-aspartate + phosphate + H(+). It functions in the pathway pyrimidine metabolism; UMP biosynthesis via de novo pathway; (S)-dihydroorotate from bicarbonate: step 2/3. Functionally, catalyzes the condensation of carbamoyl phosphate and aspartate to form carbamoyl aspartate and inorganic phosphate, the committed step in the de novo pyrimidine nucleotide biosynthesis pathway. This is Aspartate carbamoyltransferase catalytic subunit from Lactobacillus delbrueckii subsp. bulgaricus (strain ATCC BAA-365 / Lb-18).